We begin with the raw amino-acid sequence, 825 residues long: Fibrous sheath CABYR-binding protein (825 aa).

2 disordered regions span residues 1-43 and 113-139; these read MVGK…SYSA and QDVE…RTGY. Residues 21-40 show a composition bias toward polar residues; that stretch reads KSSSPKATHRIGNTSGSKGS. Ser160 carries the post-translational modification Phosphoserine. Disordered stretches follow at residues 168 to 232, 244 to 718, and 732 to 751; these read SRPD…LLED, QEGS…DKHS, and GEAS…EDEA. Positions 200 to 220 are enriched in polar residues; the sequence is PATNSNEEIGQKNISRTSFTQ. Residues 277 to 290 are compositionally biased toward basic and acidic residues; sequence ATAKAEPRPAEETH. 2 stretches are compositionally biased toward low complexity: residues 348–357 and 398–407; these read AEILPPSAEE and PLPAEGALEE. Pro residues predominate over residues 610 to 676; it reads VQPPPAEEAP…PAEVQPPPAE (67 aa).

As to quaternary structure, interacts with CABYR. Interacts with ROPN1 and ROPN1L; the interaction increases upon spermatozoa capacitation conditions. Phosphorylated by PKA upon spermatozoa capacitation conditions.

It localises to the cell projection. The protein localises to the cilium. Its subcellular location is the flagellum. Its function is as follows. May be involved in the later stages of fibrous sheath biogenesis and spermatozoa capacitation. Inhibits ROPN1 and ROPN1L SUMOylation. Binds calcium. This Homo sapiens (Human) protein is Fibrous sheath CABYR-binding protein (FSCB).